Here is a 227-residue protein sequence, read N- to C-terminus: Cytochrome c oxidase subunit 2 (227 aa).

Residues 1 to 14 (MAYPFQLGLQDATS) are Mitochondrial intermembrane-facing. The helical transmembrane segment at 15 to 45 (PIMEELTNFHDHTLMIVFLISSLVLYLISLM) threads the bilayer. Topologically, residues 46-59 (LTTKLIHTNTMDAQ) are mitochondrial matrix. The chain crosses the membrane as a helical span at residues 60–87 (EVETVWTILPAIILIMIALPSLRILYLM). At 88 to 227 (DEINNPVLTV…LFENWSTSMI (140 aa)) the chain is on the mitochondrial intermembrane side. 6 residues coordinate Cu cation: His-161, Cys-196, Glu-198, Cys-200, His-204, and Met-207. Glu-198 contributes to the Mg(2+) binding site.

The protein belongs to the cytochrome c oxidase subunit 2 family. Component of the cytochrome c oxidase (complex IV, CIV), a multisubunit enzyme composed of 14 subunits. The complex is composed of a catalytic core of 3 subunits MT-CO1, MT-CO2 and MT-CO3, encoded in the mitochondrial DNA, and 11 supernumerary subunits COX4I, COX5A, COX5B, COX6A, COX6B, COX6C, COX7A, COX7B, COX7C, COX8 and NDUFA4, which are encoded in the nuclear genome. The complex exists as a monomer or a dimer and forms supercomplexes (SCs) in the inner mitochondrial membrane with NADH-ubiquinone oxidoreductase (complex I, CI) and ubiquinol-cytochrome c oxidoreductase (cytochrome b-c1 complex, complex III, CIII), resulting in different assemblies (supercomplex SCI(1)III(2)IV(1) and megacomplex MCI(2)III(2)IV(2)). Found in a complex with TMEM177, COA6, COX18, COX20, SCO1 and SCO2. Interacts with TMEM177 in a COX20-dependent manner. Interacts with COX20. Interacts with COX16. Cu cation serves as cofactor.

The protein localises to the mitochondrion inner membrane. It catalyses the reaction 4 Fe(II)-[cytochrome c] + O2 + 8 H(+)(in) = 4 Fe(III)-[cytochrome c] + 2 H2O + 4 H(+)(out). Its function is as follows. Component of the cytochrome c oxidase, the last enzyme in the mitochondrial electron transport chain which drives oxidative phosphorylation. The respiratory chain contains 3 multisubunit complexes succinate dehydrogenase (complex II, CII), ubiquinol-cytochrome c oxidoreductase (cytochrome b-c1 complex, complex III, CIII) and cytochrome c oxidase (complex IV, CIV), that cooperate to transfer electrons derived from NADH and succinate to molecular oxygen, creating an electrochemical gradient over the inner membrane that drives transmembrane transport and the ATP synthase. Cytochrome c oxidase is the component of the respiratory chain that catalyzes the reduction of oxygen to water. Electrons originating from reduced cytochrome c in the intermembrane space (IMS) are transferred via the dinuclear copper A center (CU(A)) of subunit 2 and heme A of subunit 1 to the active site in subunit 1, a binuclear center (BNC) formed by heme A3 and copper B (CU(B)). The BNC reduces molecular oxygen to 2 water molecules using 4 electrons from cytochrome c in the IMS and 4 protons from the mitochondrial matrix. This is Cytochrome c oxidase subunit 2 (MT-CO2) from Gerbillurus vallinus (Brush-tailed hairy-footed gerbil).